A 311-amino-acid polypeptide reads, in one-letter code: Aspartate carbamoyltransferase catalytic subunit (311 aa).

Arginine 55 and threonine 56 together coordinate carbamoyl phosphate. Lysine 85 is an L-aspartate binding site. Carbamoyl phosphate contacts are provided by arginine 106, histidine 135, and glutamine 138. 2 residues coordinate L-aspartate: arginine 168 and arginine 230. Residues leucine 268 and proline 269 each coordinate carbamoyl phosphate.

The protein belongs to the aspartate/ornithine carbamoyltransferase superfamily. ATCase family. In terms of assembly, heterododecamer (2C3:3R2) of six catalytic PyrB chains organized as two trimers (C3), and six regulatory PyrI chains organized as three dimers (R2).

The enzyme catalyses carbamoyl phosphate + L-aspartate = N-carbamoyl-L-aspartate + phosphate + H(+). Its pathway is pyrimidine metabolism; UMP biosynthesis via de novo pathway; (S)-dihydroorotate from bicarbonate: step 2/3. Its function is as follows. Catalyzes the condensation of carbamoyl phosphate and aspartate to form carbamoyl aspartate and inorganic phosphate, the committed step in the de novo pyrimidine nucleotide biosynthesis pathway. The protein is Aspartate carbamoyltransferase catalytic subunit of Yersinia pseudotuberculosis serotype IB (strain PB1/+).